A 346-amino-acid polypeptide reads, in one-letter code: Tetraacyldisaccharide 4'-kinase (346 aa).

54-61 (TVGGAGKT) lines the ATP pocket.

This sequence belongs to the LpxK family.

The enzyme catalyses a lipid A disaccharide + ATP = a lipid IVA + ADP + H(+). The protein operates within glycolipid biosynthesis; lipid IV(A) biosynthesis; lipid IV(A) from (3R)-3-hydroxytetradecanoyl-[acyl-carrier-protein] and UDP-N-acetyl-alpha-D-glucosamine: step 6/6. Its function is as follows. Transfers the gamma-phosphate of ATP to the 4'-position of a tetraacyldisaccharide 1-phosphate intermediate (termed DS-1-P) to form tetraacyldisaccharide 1,4'-bis-phosphate (lipid IVA). The chain is Tetraacyldisaccharide 4'-kinase from Rhizobium etli (strain ATCC 51251 / DSM 11541 / JCM 21823 / NBRC 15573 / CFN 42).